The primary structure comprises 46 residues: Mu-segestritoxin-Sf1g (46 aa).

4 disulfide bridges follow: Cys3–Cys19, Cys10–Cys22, Cys18–Cys42, and Cys24–Cys40. The segment at 31 to 33 is keys region for toxin activity; the sequence is RPW.

The protein belongs to the neurotoxin 16 (SFI) family. As to expression, expressed by the venom gland.

Its subcellular location is the secreted. Functionally, insecticidal toxin. It inhibits insect voltage-gated sodium channels (Nav) by partially blocking the channel pore in DUM neurons from the American cockroach, not by acting as a gating modifier. The inhibition is only partially reversible after prolonged washout. In vivo, the toxin causes flaccid paralysis followed by death when injected into Heliothis virescens larvae. It also causes uncoordinated movements followed by full paralysis to sheep blowflies (Lucilia cuprina). When the toxin is fused to snowdrop lectin, it is orally active against larvae of the tomato moth (Laconobia oleracea), the rice brown planthopper (Nilaparvata lugens), and the peach-potato aphid (Myzus persicae). The polypeptide is Mu-segestritoxin-Sf1g (Segestria florentina (Tube-web spider)).